A 648-amino-acid chain; its full sequence is Macrolide export ATP-binding/permease protein MacB (648 aa).

The region spanning I6–I251 is the ABC transporter domain. Residue G42 to S49 participates in ATP binding. 4 consecutive transmembrane segments (helical) span residues L273–G293, V528–V548, F572–L592, and S613–A633.

Belongs to the ABC transporter superfamily. Macrolide exporter (TC 3.A.1.122) family. In terms of assembly, homodimer.

The protein localises to the cell inner membrane. Its function is as follows. Non-canonical ABC transporter that contains transmembrane domains (TMD), which form a pore in the inner membrane, and an ATP-binding domain (NBD), which is responsible for energy generation. Confers resistance against macrolides. The polypeptide is Macrolide export ATP-binding/permease protein MacB (Agrobacterium fabrum (strain C58 / ATCC 33970) (Agrobacterium tumefaciens (strain C58))).